A 344-amino-acid chain; its full sequence is Methionine import ATP-binding protein MetN (344 aa).

The ABC transporter domain occupies 2-241 (IELQGLSQRF…PQHDVTRAMI (240 aa)). 38-45 (GRSGAGKS) serves as a coordination point for ATP.

It belongs to the ABC transporter superfamily. Methionine importer (TC 3.A.1.24) family. As to quaternary structure, the complex is composed of two ATP-binding proteins (MetN), two transmembrane proteins (MetI) and a solute-binding protein (MetQ).

The protein localises to the cell inner membrane. The catalysed reaction is L-methionine(out) + ATP + H2O = L-methionine(in) + ADP + phosphate + H(+). It carries out the reaction D-methionine(out) + ATP + H2O = D-methionine(in) + ADP + phosphate + H(+). In terms of biological role, part of the ABC transporter complex MetNIQ involved in methionine import. Responsible for energy coupling to the transport system. This chain is Methionine import ATP-binding protein MetN, found in Cupriavidus necator (strain ATCC 17699 / DSM 428 / KCTC 22496 / NCIMB 10442 / H16 / Stanier 337) (Ralstonia eutropha).